Reading from the N-terminus, the 1315-residue chain is Serine/threonine-protein kinase 36 (1315 aa).

Residues 4-254 (YHVLEMIGEG…WPDLLYHPFI (251 aa)) form the Protein kinase domain. ATP-binding positions include 10–18 (IGEGSFGRV) and Lys33. The active-site Proton acceptor is the Asp125. Disordered regions lie at residues 312–345 (EAMQ…PRLG) and 365–405 (SWAE…RSTD). Residues 379–397 (RENRTTPDCERAFPEERPE) are compositionally biased toward basic and acidic residues.

It belongs to the protein kinase superfamily. Ser/Thr protein kinase family. Interacts with SPAG16 and KIF27. Mg(2+) serves as cofactor.

It localises to the cytoplasm. The protein resides in the nucleus. Its subcellular location is the cytoskeleton. The protein localises to the cilium axoneme. It carries out the reaction L-seryl-[protein] + ATP = O-phospho-L-seryl-[protein] + ADP + H(+). The enzyme catalyses L-threonyl-[protein] + ATP = O-phospho-L-threonyl-[protein] + ADP + H(+). Its function is as follows. Serine/threonine protein kinase which plays an important role in the sonic hedgehog (Shh) pathway by regulating the activity of GLI transcription factors. Controls the activity of the transcriptional regulators GLI1, GLI2 and GLI3 by opposing the effect of SUFU and promoting their nuclear localization. GLI2 requires an additional function of STK36 to become transcriptionally active, but the enzyme does not need to possess an active kinase catalytic site for this to occur. Required for postnatal development, possibly by regulating the homeostasis of cerebral spinal fluid or ciliary function. Essential for construction of the central pair apparatus of motile cilia. The protein is Serine/threonine-protein kinase 36 of Pongo abelii (Sumatran orangutan).